A 344-amino-acid chain; its full sequence is Heptahelical transmembrane protein 3 (344 aa).

Over 1–76 (MKRRRSAKKS…AFSWHNETLN (76 aa)) the chain is Cytoplasmic. Residues 77-97 (IWTHLIGFGIFLWMTVVSCLE) traverse the membrane as a helical segment. The Extracellular segment spans residues 98-147 (TTEISLAGVFNGMAGVRICLSSNQTLLHDSNVTHHISCLTSQGEAIPKWP). Residues 148 to 168 (WLVYLVGAMGCLICSSVSHLL) traverse the membrane as a helical segment. Over 169 to 184 (ACHSKRFNVFFWRLDY) the chain is Cytoplasmic. The helical transmembrane segment at 185–205 (AGISLMIVASFFAPIYYAFSC) threads the bilayer. Topologically, residues 206–210 (HPNFR) are extracellular. A helical membrane pass occupies residues 211–231 (LLYLSSISILGLLAIITLLSP). Residues 232–244 (ALSTPRFRPFRAN) are Cytoplasmic-facing. The helical transmembrane segment at 245–265 (LFLAMGSSAVIPATHVLCLYW) threads the bilayer. The Extracellular portion of the chain corresponds to 266–269 (DHPN). Residues 270 to 290 (VFIALGYEIATALSYFVGATF) traverse the membrane as a helical segment. Residues 291-312 (YVSRVPERWKPGAFDMAGHSHQ) lie on the Cytoplasmic side of the membrane. The helical transmembrane segment at 313–333 (IFHVFVVMGALAHCVTTLLII) threads the bilayer. At 334 to 344 (DFSRASPSCGF) the chain is on the extracellular side.

It belongs to the ADIPOR family. In terms of tissue distribution, expressed in roots and flowers.

It is found in the membrane. Its function is as follows. May play a role in abiotic stress response. The polypeptide is Heptahelical transmembrane protein 3 (HHP3) (Arabidopsis thaliana (Mouse-ear cress)).